Reading from the N-terminus, the 58-residue chain is Large ribosomal subunit protein eL24 (58 aa).

Residues C6, C9, C32, and C36 each coordinate Zn(2+). Residues 6-36 form a C4-type zinc finger; that stretch reads CAFCGADILPGYGIMYVKTDGTTLRFCSRKC.

This sequence belongs to the eukaryotic ribosomal protein eL24 family. As to quaternary structure, part of the 50S ribosomal subunit. Forms a cluster with proteins L3 and L14. Zn(2+) serves as cofactor.

Binds to the 23S rRNA. In Pyrobaculum islandicum (strain DSM 4184 / JCM 9189 / GEO3), this protein is Large ribosomal subunit protein eL24.